Here is a 333-residue protein sequence, read N- to C-terminus: Taste receptor type 2 member 123 (333 aa).

At 1 to 13 (MFSQKINYSHLFT) the chain is on the extracellular side. N-linked (GlcNAc...) asparagine glycosylation occurs at Asn7. A helical membrane pass occupies residues 14–34 (FSITLYVEIVTGILGHGFIAL). Topologically, residues 35–60 (VNIMDWVKRRRISSVDQILTALALTR) are cytoplasmic. The chain crosses the membrane as a helical span at residues 61–81 (FIYVLSMLICILLFMLCPHLP). Topologically, residues 82-90 (RRSEMLSAM) are extracellular. Residues 91–111 (GIFWVVNSHFSIWLTTCLGVF) traverse the membrane as a helical segment. At 112–134 (YFLKIANFSNSFFLYLKWRVKKV) the chain is on the cytoplasmic side. A helical membrane pass occupies residues 135 to 155 (ILIIILASLIFLTLHILSLGI). Residues 156–205 (YDQFSIAAYVGNMSYSLTDLTQFSSTFLFSNSSNVFLITNSSHVFLPINS) are Extracellular-facing. N-linked (GlcNAc...) asparagine glycosylation is found at Asn167, Asn186, and Asn195. A helical membrane pass occupies residues 206–226 (LFMLIPFTVSLVAFLMLIFSL). Topologically, residues 227–253 (WKHHKKMQVNAKQPRDVSTMAHIKALQ) are cytoplasmic. The helical transmembrane segment at 254-274 (TVFSFLLLYAIYLLFLIIGIL) threads the bilayer. The Extracellular segment spans residues 275–281 (NLGLMEK). Residues 282 to 302 (IVILIFDHISGAVFPISHSFV) form a helical membrane-spanning segment. The Cytoplasmic portion of the chain corresponds to 303 to 333 (LILGNSKLRQASLSVLPCLRCQSKDMDTMGL).

It belongs to the G-protein coupled receptor T2R family. Expressed in subsets of taste receptor cells of the tongue and palate epithelium and exclusively in gustducin-positive cells. Expressed in the duodenum, antrum and fundus (part of the stomach).

Its subcellular location is the membrane. Its function is as follows. Gustducin-coupled receptor implicated in the perception of bitter compounds in the oral cavity and the gastrointestinal tract. Signals through PLCB2 and the calcium-regulated cation channel TRPM5. The polypeptide is Taste receptor type 2 member 123 (Tas2r123) (Mus musculus (Mouse)).